Consider the following 33-residue polypeptide: Brevinin-2HSb (33 aa).

Cysteines 27 and 33 form a disulfide.

Expressed by the skin glands.

The protein localises to the secreted. Its function is as follows. Has antibacterial activity against the Gram-positive bacterium S.aureus ATCC 25923 and the Gram-negative bacterium E.coli ATCC 25726. This chain is Brevinin-2HSb, found in Odorrana hosii (Hose's rock frog).